Here is a 216-residue protein sequence, read N- to C-terminus: Somatotropin (216 aa).

The signal sequence occupies residues 1-25 (MAPGSWFSPLLIAVVTLGLPQGAAA). Residue His-45 coordinates Zn(2+). An intrachain disulfide couples Cys-78 to Cys-189. A Zn(2+)-binding site is contributed by Glu-198. A disulfide bridge connects residues Cys-206 and Cys-214.

The protein belongs to the somatotropin/prolactin family. Pituitary gland.

It localises to the secreted. In terms of biological role, growth hormone plays an important role in growth control. The polypeptide is Somatotropin (GH) (Meleagris gallopavo (Wild turkey)).